The following is a 178-amino-acid chain: Natriuretic and helokinestatin peptides (178 aa).

A signal peptide spans 1 to 25 (MNPRLACSTWLPLLLVLFTLDQGRA). 5 propeptides span residues 26–58 (NPVE…SEEN), 69–73 (ASDEN), 85–89 (ASDEN), 103–112 (ASEQKGPPFN), and 123–146 (AANE…RNKR). Disordered stretches follow at residues 69-107 (ASDE…SEQK) and 135-155 (RSFE…GCFG). Cys153 and Cys169 are oxidised to a cystine.

The protein in the C-terminal section; belongs to the natriuretic peptide family. Expressed by the venom gland.

The protein localises to the secreted. Functionally, helokinestatins antagonize the vasodilatory actions of bradykinin at the B2 bradykinin receptor (BDKRB2), with helokinestatin-1 being the most potent antagonist. In terms of biological role, exhibits hypotensive and vasodepressor activities, possibly by targeting natriuretic peptide receptors NPR1 and NPR2. This Heloderma suspectum cinctum (Banded Gila monster) protein is Natriuretic and helokinestatin peptides.